Reading from the N-terminus, the 249-residue chain is Metallo-beta-lactamase type 2 (249 aa).

The signal sequence occupies residues 1–22 (MLKKIKISLILALGLTSLQAFG). Positions 98, 100, 102, 161, and 180 each coordinate Zn(2+). Lysine 183 is a substrate binding site. Histidine 222 lines the Zn(2+) pocket.

It belongs to the metallo-beta-lactamase superfamily. Class-B beta-lactamase family. Monomer. Zn(2+) serves as cofactor.

It is found in the periplasm. The enzyme catalyses a beta-lactam + H2O = a substituted beta-amino acid. Functionally, confers resistance to the different beta-lactams antibiotics (penicillin, cephalosporin and carbapenem) via the hydrolysis of the beta-lactam ring. This chain is Metallo-beta-lactamase type 2 (blaB2), found in Elizabethkingia meningoseptica (Chryseobacterium meningosepticum).